A 467-amino-acid polypeptide reads, in one-letter code: tRNA-2-methylthio-N(6)-dimethylallyladenosine synthase (467 aa).

In terms of domain architecture, MTTase N-terminal spans 4-124 (RKLFIKSYGC…LPEMVAKVER (121 aa)). [4Fe-4S] cluster is bound by residues C13, C49, C87, C161, C165, and C168. The 233-residue stretch at 147-379 (QAHGPSAFLS…QARLVEIQQA (233 aa)) folds into the Radical SAM core domain. One can recognise a TRAM domain in the interval 382 to 444 (QACVGRPMDV…SNSLAARLVE (63 aa)).

It belongs to the methylthiotransferase family. MiaB subfamily. Monomer. The cofactor is [4Fe-4S] cluster.

It localises to the cytoplasm. It carries out the reaction N(6)-dimethylallyladenosine(37) in tRNA + (sulfur carrier)-SH + AH2 + 2 S-adenosyl-L-methionine = 2-methylsulfanyl-N(6)-dimethylallyladenosine(37) in tRNA + (sulfur carrier)-H + 5'-deoxyadenosine + L-methionine + A + S-adenosyl-L-homocysteine + 2 H(+). Functionally, catalyzes the methylthiolation of N6-(dimethylallyl)adenosine (i(6)A), leading to the formation of 2-methylthio-N6-(dimethylallyl)adenosine (ms(2)i(6)A) at position 37 in tRNAs that read codons beginning with uridine. In Rhodospirillum rubrum (strain ATCC 11170 / ATH 1.1.1 / DSM 467 / LMG 4362 / NCIMB 8255 / S1), this protein is tRNA-2-methylthio-N(6)-dimethylallyladenosine synthase.